Reading from the N-terminus, the 352-residue chain is Ion-translocating oxidoreductase complex subunit D (352 aa).

Helical transmembrane passes span 20-40 (IMLLVLLAAVPGIAAQLWFFG), 42-62 (GTLVQILLASVSALLAEALVL), 78-109 (ALLTGLLLAVSIPPLAPWWMVVLGTVFAVIIA), 123-143 (PAMIGYVVLLISFPVQMTSWL), and 148-168 (IAVNILGFIDAIQVIFSGHTA). An FMN phosphoryl threonine modification is found at T187. Helical transmembrane passes span 214 to 234 (ILAGAGWQWVNLAWLAGGVWL), 242 to 262 (WHIPLSFLVTLALCATLGWLF), 267 to 287 (LAAPQIHLLSGATMLGAFFIL), 301 to 321 (LIFGALAGLLVWLIRSFGGYP), and 322 to 342 (DGVAFAVLLANITVPLIDYYT).

It belongs to the NqrB/RnfD family. As to quaternary structure, the complex is composed of six subunits: RsxA, RsxB, RsxC, RsxD, RsxE and RsxG. The cofactor is FMN.

Its subcellular location is the cell inner membrane. Part of a membrane-bound complex that couples electron transfer with translocation of ions across the membrane. Required to maintain the reduced state of SoxR. In Shigella dysenteriae serotype 1 (strain Sd197), this protein is Ion-translocating oxidoreductase complex subunit D.